Consider the following 328-residue polypeptide: DNA-directed RNA polymerase subunit alpha (328 aa).

Residues 1-232 are alpha N-terminal domain (alpha-NTD); the sequence is MSTQGFLKPR…DQISVFAALE (232 aa). Residues 248-328 are alpha C-terminal domain (alpha-CTD); sequence IDPVLLRPVD…NWPPLGLERP (81 aa).

This sequence belongs to the RNA polymerase alpha chain family. In terms of assembly, homodimer. The RNAP catalytic core consists of 2 alpha, 1 beta, 1 beta' and 1 omega subunit. When a sigma factor is associated with the core the holoenzyme is formed, which can initiate transcription.

It catalyses the reaction RNA(n) + a ribonucleoside 5'-triphosphate = RNA(n+1) + diphosphate. DNA-dependent RNA polymerase catalyzes the transcription of DNA into RNA using the four ribonucleoside triphosphates as substrates. This is DNA-directed RNA polymerase subunit alpha from Bordetella avium (strain 197N).